We begin with the raw amino-acid sequence, 452 residues long: Agmatine coumaroyltransferase (452 aa).

Active-site proton acceptor residues include H163 and D396.

It belongs to the plant acyltransferase family.

The enzyme catalyses 4-coumaroyl-CoA + agmatine = N-(4-guanidinobutyl)-4-hydroxycinnamamide + CoA + H(+). Involved in the biosynthesis of hydroxycinnamic acid amides, which play a role in defense against pathogens. Agmatine is the preferred acyl acceptor, lower activity is observed towards putrescine. The preferred acyl donor is p-coumaroyl-CoA, lower activity is seen towards feruloyl-CoA. The polypeptide is Agmatine coumaroyltransferase (Arabidopsis thaliana (Mouse-ear cress)).